A 78-amino-acid chain; its full sequence is Large ribosomal subunit protein bL28 (78 aa).

The disordered stretch occupies residues 1–24 (MSRVCQVTGKRPAVGNNRSHANNA).

This sequence belongs to the bacterial ribosomal protein bL28 family.

This Aeromonas salmonicida (strain A449) protein is Large ribosomal subunit protein bL28.